Reading from the N-terminus, the 314-residue chain is Mitotic checkpoint protein BUB3.3 (314 aa).

WD repeat units follow at residues 11–50 (PIED…LSLE), 52–90 (NSQA…VDTI), 92–131 (RHDD…SLVF), 134–173 (DAGG…QSYA), 176–215 (VEVP…SEIK), 229–269 (LDGV…RLNE), and 272–311 (RYSN…QVFI).

Belongs to the WD repeat BUB3 family. Part of the mitotic checkpoint complex (MCC).

Its subcellular location is the nucleus. It is found in the chromosome. It localises to the centromere. The protein localises to the kinetochore. The protein resides in the cytoplasm. Its subcellular location is the cytoskeleton. It is found in the phragmoplast. It localises to the spindle. Functionally, has a dual function in spindle-assembly checkpoint signaling and in promoting the establishment of correct kinetochore-microtubule (K-MT) attachments. Promotes the formation of stable end-on bipolar attachments. Necessary for kinetochore localization of BUB1. The BUB1/BUB3 complex plays a role in the inhibition of anaphase-promoting complex or cyclosome (APC/C) when spindle-assembly checkpoint is activated and inhibits the ubiquitin ligase activity of APC/C by phosphorylating its activator CDC20. This is Mitotic checkpoint protein BUB3.3 (BUB3.3) from Arabidopsis thaliana (Mouse-ear cress).